A 479-amino-acid chain; its full sequence is Odorant receptor coreceptor (479 aa).

At 1–43 (MMKMKQQGLVADLLPNIRVMKFFGHFVFNYYDDNSSKYLHKIF) the chain is on the cytoplasmic side. The helical transmembrane segment at 44–64 (CCVNLFLLLLQFALCAVNLII) threads the bilayer. The Extracellular segment spans residues 65-73 (ESADVDDLT). Residues 74-94 (ANTITLLFFTHSIVKIIYFAV) traverse the membrane as a helical segment. Over 95-133 (RSKYFYRTWAIWNNPNSHPLFAESNARYHAIALKKMRLL) the chain is Cytoplasmic. The helical transmembrane segment at 134–154 (LFLVGATTVLSAIAWTVLTFF) threads the bilayer. Over 155 to 190 (EHPIRKLVDPVTNETTIIELPQLLLRSYYPFDASKG) the chain is Extracellular. N167 is a glycosylation site (N-linked (GlcNAc...) asparagine). A helical membrane pass occupies residues 191–211 (IMHVIVLIYQFYWVLFMLIDA). The Cytoplasmic portion of the chain corresponds to 212–350 (NSLDVLFCSW…IVRLVTAVGD (139 aa)). The tract at residues 261–280 (SAEHLRESENQPPPPVPPQG) is disordered. A helical transmembrane segment spans residues 351 to 371 (AYGFALLLHMLTTTITLTLLA). Over 372–383 (YQATKVNGVNVY) the chain is Extracellular. The chain crosses the membrane as a helical span at residues 384–404 (AASTIGYIIYTFGQVFLFCIF). Residues 405–455 (GNRLIEESTSVMEAAYSCHWYDGSEEAKTFVQIVCQQCQKAMSISGAKFFT) lie on the Cytoplasmic side of the membrane. A helical membrane pass occupies residues 456–476 (VSLDLFASVLGAVVTYFMVLV). Over 477–479 (QLK) the chain is Extracellular.

Belongs to the insect chemoreceptor superfamily. Heteromeric odorant receptor channel (TC 1.A.69) family. Orco subfamily. In terms of assembly, heterodimer with conventional odorant receptors (ORs).

The protein resides in the cell membrane. In terms of biological role, odorant coreceptor which complexes with conventional odorant receptors (ORs) to form odorant-sensing units, providing sensitive and prolonged odorant signaling and calcium permeability. Obligate coreceptor of all odorant receptors. Orco is a universal and integral part of the functional odorant receptor, involved in the dendritic localization of other olfactory receptors. Can form functional ion channels in the absence of an odor-binding odorant receptor. Plays a central role in the perception of olfactory stimuli in ants and is essential for ant social organization. Required for pheromone sensing and mating behavior. Also required for the development and maintenance of odorant receptor neurons (ORNs) and of antennal lobe glomeruli. This chain is Odorant receptor coreceptor, found in Harpegnathos saltator (Jerdon's jumping ant).